The sequence spans 639 residues: ATP-dependent rRNA helicase spb4 (639 aa).

Positions 14–42 (WDAVTPPLSEWVLEAMSSMGFARMTPVQA) match the Q motif motif. In terms of domain architecture, Helicase ATP-binding spans 45–249 (IPLFMAHKDV…RVGLRNPVKI (205 aa)). 58–65 (AVTGSGKT) is a binding site for ATP. The short motif at 197–200 (DEAD) is the DEAD box element. A Helicase C-terminal domain is found at 283–437 (ALKNILSSVQ…SISFSDADAT (155 aa)). 2 disordered regions span residues 531–601 (RKEL…ETKE) and 620–639 (AAKA…KGFD). A coiled-coil region spans residues 561 to 624 (QNAENKNKKL…RFRQAAAKAE (64 aa)). Residues 577–601 (KLKQEKTKWENMTEEERQKARETKE) show a composition bias toward basic and acidic residues.

Belongs to the DEAD box helicase family. DDX55/SPB4 subfamily. Component of pre-60S ribosomal complexes.

The protein localises to the nucleus. It is found in the nucleolus. It carries out the reaction ATP + H2O = ADP + phosphate + H(+). Functionally, ATP-binding RNA helicase involved in the biogenesis of 60S ribosomal subunits. Binds 90S pre-ribosomal particles and dissociates from pre-60S ribosomal particles after processing of 27SB pre-rRNA. Required for the normal formation of 18S rRNA through the processing of pre-rRNAs at sites A0, A1 and A2, and the normal formation of 25S and 5.8S rRNAs through the processing of pre-rRNAs at sites C1 and C2. The polypeptide is ATP-dependent rRNA helicase spb4 (Aspergillus clavatus (strain ATCC 1007 / CBS 513.65 / DSM 816 / NCTC 3887 / NRRL 1 / QM 1276 / 107)).